The chain runs to 351 residues: Adenine deaminase (351 aa).

3 residues coordinate Zn(2+): histidine 20, histidine 22, and histidine 200. The active-site Proton donor is the glutamate 203. Aspartate 281 contacts Zn(2+). Position 282 (aspartate 282) interacts with substrate.

Belongs to the metallo-dependent hydrolases superfamily. Adenosine and AMP deaminases family. Adenine deaminase type 2 subfamily. It depends on Zn(2+) as a cofactor.

It carries out the reaction adenine + H2O + H(+) = hypoxanthine + NH4(+). In terms of biological role, catalyzes the hydrolytic deamination of adenine to hypoxanthine. Plays an important role in the purine salvage pathway and in nitrogen catabolism. The sequence is that of Adenine deaminase from Cupriavidus taiwanensis (strain DSM 17343 / BCRC 17206 / CCUG 44338 / CIP 107171 / LMG 19424 / R1) (Ralstonia taiwanensis (strain LMG 19424)).